The sequence spans 337 residues: Quinolinate synthase (337 aa).

H38 and S59 together coordinate iminosuccinate. C104 serves as a coordination point for [4Fe-4S] cluster. Residues 130–132 (YAN) and S147 each bind iminosuccinate. C191 contributes to the [4Fe-4S] cluster binding site. Iminosuccinate is bound by residues 217-219 (HPE) and T234. C288 provides a ligand contact to [4Fe-4S] cluster.

It belongs to the quinolinate synthase family. Type 1 subfamily. The cofactor is [4Fe-4S] cluster.

The protein localises to the cytoplasm. The enzyme catalyses iminosuccinate + dihydroxyacetone phosphate = quinolinate + phosphate + 2 H2O + H(+). It participates in cofactor biosynthesis; NAD(+) biosynthesis; quinolinate from iminoaspartate: step 1/1. In terms of biological role, catalyzes the condensation of iminoaspartate with dihydroxyacetone phosphate to form quinolinate. The polypeptide is Quinolinate synthase (Wigglesworthia glossinidia brevipalpis).